Here is a 201-residue protein sequence, read N- to C-terminus: Orotate phosphoribosyltransferase (201 aa).

Residues lysine 90 and 113–121 (EDIITTGGS) contribute to the 5-phospho-alpha-D-ribose 1-diphosphate site. Positions 117 and 145 each coordinate orotate.

The protein belongs to the purine/pyrimidine phosphoribosyltransferase family. PyrE subfamily. As to quaternary structure, homodimer. Requires Mg(2+) as cofactor.

It catalyses the reaction orotidine 5'-phosphate + diphosphate = orotate + 5-phospho-alpha-D-ribose 1-diphosphate. It participates in pyrimidine metabolism; UMP biosynthesis via de novo pathway; UMP from orotate: step 1/2. Its function is as follows. Catalyzes the transfer of a ribosyl phosphate group from 5-phosphoribose 1-diphosphate to orotate, leading to the formation of orotidine monophosphate (OMP). This Sulfurovum sp. (strain NBC37-1) protein is Orotate phosphoribosyltransferase.